The chain runs to 963 residues: Protein translocase subunit SecA (963 aa).

ATP is bound by residues Gln87, 105–109 (GEGKT), and Asp512. 2 disordered regions span residues 868–909 (GPVM…EDFT) and 924–963 (QFVGGDGSSTPQQVVAGQKVGRNDPCPCGSGKKYKKCHGS). Positions 874–886 (PDEEEDGDEDSVE) are enriched in acidic residues. Positions 949, 951, 960, and 961 each coordinate Zn(2+).

This sequence belongs to the SecA family. Monomer and homodimer. Part of the essential Sec protein translocation apparatus which comprises SecA, SecYEG and auxiliary proteins SecDF. Other proteins may also be involved. Zn(2+) is required as a cofactor.

The protein resides in the cell inner membrane. It localises to the cytoplasm. The catalysed reaction is ATP + H2O + cellular proteinSide 1 = ADP + phosphate + cellular proteinSide 2.. Part of the Sec protein translocase complex. Interacts with the SecYEG preprotein conducting channel. Has a central role in coupling the hydrolysis of ATP to the transfer of proteins into and across the cell membrane, serving as an ATP-driven molecular motor driving the stepwise translocation of polypeptide chains across the membrane. The sequence is that of Protein translocase subunit SecA from Solibacter usitatus (strain Ellin6076).